A 304-amino-acid chain; its full sequence is Acetyl-coenzyme A carboxylase carboxyl transferase subunit beta (304 aa).

Residues 23–292 (VWTKCDSCGQ…PNPDAPREGV (270 aa)) enclose the CoA carboxyltransferase N-terminal domain. The Zn(2+) site is built by Cys-27, Cys-30, Cys-46, and Cys-49. A C4-type zinc finger spans residues 27–49 (CDSCGQVLYRAELERNLEVCPKC). A disordered region spans residues 283 to 304 (PNPDAPREGVVVPPAPDQESEA).

The protein belongs to the AccD/PCCB family. In terms of assembly, acetyl-CoA carboxylase is a heterohexamer composed of biotin carboxyl carrier protein (AccB), biotin carboxylase (AccC) and two subunits each of ACCase subunit alpha (AccA) and ACCase subunit beta (AccD). Zn(2+) serves as cofactor.

The protein localises to the cytoplasm. It carries out the reaction N(6)-carboxybiotinyl-L-lysyl-[protein] + acetyl-CoA = N(6)-biotinyl-L-lysyl-[protein] + malonyl-CoA. The protein operates within lipid metabolism; malonyl-CoA biosynthesis; malonyl-CoA from acetyl-CoA: step 1/1. Component of the acetyl coenzyme A carboxylase (ACC) complex. Biotin carboxylase (BC) catalyzes the carboxylation of biotin on its carrier protein (BCCP) and then the CO(2) group is transferred by the transcarboxylase to acetyl-CoA to form malonyl-CoA. This is Acetyl-coenzyme A carboxylase carboxyl transferase subunit beta from Salmonella agona (strain SL483).